The primary structure comprises 117 residues: Large ribosomal subunit protein uL18 (117 aa).

It belongs to the universal ribosomal protein uL18 family. Part of the 50S ribosomal subunit; part of the 5S rRNA/L5/L18/L25 subcomplex. Contacts the 5S and 23S rRNAs.

This is one of the proteins that bind and probably mediate the attachment of the 5S RNA into the large ribosomal subunit, where it forms part of the central protuberance. The chain is Large ribosomal subunit protein uL18 from Idiomarina loihiensis (strain ATCC BAA-735 / DSM 15497 / L2-TR).